We begin with the raw amino-acid sequence, 119 residues long: MIGIDIVSIARIEKCVKRFKMKFLERFLSPSEIVLCKDKSSSIAGFFALKEACSKALQVGIGKELSFLDIKISKSPKNAPLITLSKEKMDYFNIQSLSASISHDAGFAIAVVVVSSSNE.

Positions 5 and 51 each coordinate Mg(2+).

This sequence belongs to the P-Pant transferase superfamily. AcpS family. The cofactor is Mg(2+).

It localises to the cytoplasm. The enzyme catalyses apo-[ACP] + CoA = holo-[ACP] + adenosine 3',5'-bisphosphate + H(+). In terms of biological role, transfers the 4'-phosphopantetheine moiety from coenzyme A to a Ser of acyl-carrier-protein. This Helicobacter pylori (strain ATCC 700392 / 26695) (Campylobacter pylori) protein is Holo-[acyl-carrier-protein] synthase.